The primary structure comprises 506 residues: Tyrosine-protein phosphatase non-receptor type substrate 1 (506 aa).

Positions 1 to 29 (MEPARPAPGRLRPLLCLLLAASNAWTGTA) are cleaved as a signal peptide. Residues 30–145 (GDGELQVIQP…SGPGTHLTVS (116 aa)) form the Ig-like V-type domain. Residues 30–371 (GDGELQVIQP…PGPNDSNWTS (342 aa)) lie on the Extracellular side of the membrane. An intrachain disulfide couples C55 to C121. Residue N92 is glycosylated (N-linked (GlcNAc...) asparagine). Residues 136–159 (SGPGTHLTVSAKPSPPVLSGPTVR) form a disordered region. Ig-like C1-type domains lie at 148 to 248 (PSPP…ANLS) and 255 to 348 (PTLE…HTLE). N-linked (GlcNAc...) asparagine glycans are attached at residues N167, N179, N204, N210, N246, N270, N292, N311, N319, N344, N365, and N368. C170 and C228 are oxidised to a cystine. C273 and C331 are disulfide-bonded. The tract at residues 344 to 364 (NHTLEVSAPQKDQDTGQTPGP) is disordered. A helical transmembrane segment spans residues 372 to 392 (IFIVVGVVCALLVALLIAALY). Over 393 to 506 (LLRIRQNKAK…EYASVQVQRK (114 aa)) the chain is Cytoplasmic. The segment at 402-468 (KGSTSSTRLH…QARPPPVSED (67 aa)) is disordered. The segment covering 409–418 (RLHEPEKNTR) has biased composition (basic and acidic residues). Over residues 419–429 (ETTQIQDNNDI) the composition is skewed to polar residues. Y431 is subject to Phosphotyrosine; by Tyr-kinases. The SH2-binding signature appears at 432–435 (ADLN). Residues 441 to 446 (KSTPKA) carry the SH3-binding motif. Over residues 444-456 (PKANEPNNHTEYA) the composition is skewed to polar residues. 3 positions are modified to phosphotyrosine; by Tyr-kinases: Y455, Y472, and Y498. Short sequence motifs (SH2-binding) lie at residues 455–458 (YASI), 472–475 (YADL), and 498–501 (YASV). The segment at 480–506 (LNRTPKQPAPKPEPSYSEYASVQVQRK) is disordered. Polar residues predominate over residues 497 to 506 (EYASVQVQRK).

Binds PTPN11 when tyrosine-phosphorylated, except in macrophages, where it primarily binds PTPN6. Binds GRB2 in vitro. Binds JAK2 irrespective of its phosphorylation status and forms a stable complex. Binds SCAP1 and/or SCAP2. The resulting complex recruits FYB1. Binds FGR and PTK2B. Interacts with TRIM2. Post-translationally, phosphorylated on tyrosine residues. In terms of tissue distribution, highly expressed in spleen macrophages. Detected in skin dendritic cells.

The protein resides in the membrane. Its function is as follows. Immunoglobulin-like cell surface receptor for CD47. Acts as docking protein and induces translocation of PTPN6, PTPN11 and other binding partners from the cytosol to the plasma membrane. Supports adhesion of cerebellar neurons, neurite outgrowth and glial cell attachment. May play a key role in intracellular signaling during synaptogenesis and in synaptic function. Involved in the negative regulation of receptor tyrosine kinase-coupled cellular responses induced by cell adhesion, growth factors or insulin. Mediates negative regulation of phagocytosis, mast cell activation and dendritic cell activation. CD47 binding prevents maturation of immature dendritic cells and inhibits cytokine production by mature dendritic cells. Plays a role in antiviral immunity and limits new world arenavirus infection by decreasing virus internalization. Receptor for THBS1. Interaction with THBS1 stimulates phosphorylation of SIRPA. In response to THBS1, involved in ROS signaling in non-phagocytic cells, stimulating NADPH oxidase-derived ROS production. This Bos taurus (Bovine) protein is Tyrosine-protein phosphatase non-receptor type substrate 1 (SIRPA).